Consider the following 118-residue polypeptide: Ribonuclease P protein component (118 aa).

This sequence belongs to the RnpA family. In terms of assembly, consists of a catalytic RNA component (M1 or rnpB) and a protein subunit.

It catalyses the reaction Endonucleolytic cleavage of RNA, removing 5'-extranucleotides from tRNA precursor.. Its function is as follows. RNaseP catalyzes the removal of the 5'-leader sequence from pre-tRNA to produce the mature 5'-terminus. It can also cleave other RNA substrates such as 4.5S RNA. The protein component plays an auxiliary but essential role in vivo by binding to the 5'-leader sequence and broadening the substrate specificity of the ribozyme. This Vibrio cholerae serotype O1 (strain ATCC 39541 / Classical Ogawa 395 / O395) protein is Ribonuclease P protein component.